A 541-amino-acid polypeptide reads, in one-letter code: Metal transporter Nramp1 (541 aa).

An N-linked (GlcNAc...) asparagine glycan is attached at N17. Transmembrane regions (helical) follow at residues 45–65 (LFAY…PGNF), 78–98 (ELLW…SLAA), 122–142 (FILW…EVIG), 153–173 (IPVW…LALQ), 182–202 (LFIA…LGYA), 222–242 (GAAG…NLFL), 271–291 (GFAL…SGAV), 315–335 (FLLE…ALLA), 371–391 (SLAI…GAGK), and 392–412 (LIII…VPLL). Residue N426 is glycosylated (N-linked (GlcNAc...) asparagine). Transmembrane regions (helical) follow at residues 430–450 (ISSI…YYLA) and 465–485 (VAAI…LAGV). A glycan (N-linked (GlcNAc...) asparagine) is linked at N511.

The protein belongs to the NRAMP (TC 2.A.55) family.

It localises to the membrane. Its function is as follows. Probable divalent metal transporter. The polypeptide is Metal transporter Nramp1 (Populus trichocarpa (Western balsam poplar)).